The chain runs to 158 residues: MSGAGAPTFTPDPAAASGLNVAIVAAQWHTEIMDGLIAGAQAAAADLGLEPVLVRVPGTVELTVAAARLAERFDVVVVLGVVVRGDTPHFDYVCQSVTQGVTEVSVRTGVPVGFGVLTVDTEQQARDRAGLPGSREDKGREALEAAVLTELALRRAGA.

Residues W28, 59–61 (TVE), and 81–83 (VVV) each bind 5-amino-6-(D-ribitylamino)uracil. Residue 86 to 87 (DT) participates in (2S)-2-hydroxy-3-oxobutyl phosphate binding. The Proton donor role is filled by H89. Residue F114 participates in 5-amino-6-(D-ribitylamino)uracil binding. Residue R128 coordinates (2S)-2-hydroxy-3-oxobutyl phosphate.

Belongs to the DMRL synthase family.

The catalysed reaction is (2S)-2-hydroxy-3-oxobutyl phosphate + 5-amino-6-(D-ribitylamino)uracil = 6,7-dimethyl-8-(1-D-ribityl)lumazine + phosphate + 2 H2O + H(+). It participates in cofactor biosynthesis; riboflavin biosynthesis; riboflavin from 2-hydroxy-3-oxobutyl phosphate and 5-amino-6-(D-ribitylamino)uracil: step 1/2. In terms of biological role, catalyzes the formation of 6,7-dimethyl-8-ribityllumazine by condensation of 5-amino-6-(D-ribitylamino)uracil with 3,4-dihydroxy-2-butanone 4-phosphate. This is the penultimate step in the biosynthesis of riboflavin. The polypeptide is 6,7-dimethyl-8-ribityllumazine synthase (Micrococcus luteus (strain ATCC 4698 / DSM 20030 / JCM 1464 / CCM 169 / CCUG 5858 / IAM 1056 / NBRC 3333 / NCIMB 9278 / NCTC 2665 / VKM Ac-2230) (Micrococcus lysodeikticus)).